Consider the following 144-residue polypeptide: MPTINQLVRKPRKRVTKKVKAPALRFSLNVLKGKLTRGKGSPFKRGVCTQVRTMTPKKPNSALRKIARVRLSNGMEVTAYIPGEGHNLQEHSVVLIRGGRVKDLPGVRYHIVRGTLDAQGVANRKQGRSKYGTKKASAVPAKKK.

3-methylthioaspartic acid is present on Asp-103. The interval 121–144 (VANRKQGRSKYGTKKASAVPAKKK) is disordered.

Belongs to the universal ribosomal protein uS12 family. As to quaternary structure, part of the 30S ribosomal subunit. Contacts proteins S8 and S17. May interact with IF1 in the 30S initiation complex.

Functionally, with S4 and S5 plays an important role in translational accuracy. In terms of biological role, interacts with and stabilizes bases of the 16S rRNA that are involved in tRNA selection in the A site and with the mRNA backbone. Located at the interface of the 30S and 50S subunits, it traverses the body of the 30S subunit contacting proteins on the other side and probably holding the rRNA structure together. The combined cluster of proteins S8, S12 and S17 appears to hold together the shoulder and platform of the 30S subunit. The sequence is that of Small ribosomal subunit protein uS12 from Roseiflexus castenholzii (strain DSM 13941 / HLO8).